The primary structure comprises 321 residues: Solute carrier family 25 member 33 (321 aa).

Solcar repeat units follow at residues 9–118, 126–213, and 231–315; these read ENTL…AKEQ, NSNI…LKKY, and TSFF…IVYL. A run of 6 helical transmembrane segments spans residues 12-32, 49-65, 121-141, 190-210, 233-253, and 298-318; these read LLHLFAGGCGGTVGAIFTCPL, VYYPQVHLGTISGAGMV, GIFVPNSNIVHIFSAGSAAFI, LTASYAGISETIICFAIYESL, FFGLMAAAALSKGCASCIAYP, and QIPNTAIVLSTYELIVYLLED.

The protein belongs to the mitochondrial carrier (TC 2.A.29) family. In terms of tissue distribution, expressed in the central nervous system. Also expressed in testis and skeletal muscle. Weakly expressed in heart, liver, kidney, prostate, colon and peripheral blood leukocytes.

Its subcellular location is the mitochondrion inner membrane. The catalysed reaction is UTP(in) + UDP(out) = UTP(out) + UDP(in). It catalyses the reaction dUTP(out) + UTP(in) = dUTP(in) + UTP(out). The enzyme catalyses 5-methyl-UTP(out) + UTP(in) = 5-methyl-UTP(in) + UTP(out). It carries out the reaction 5-methyl-UDP(out) + UTP(in) = 5-methyl-UDP(in) + UTP(out). The catalysed reaction is UTP(in) + CTP(out) = UTP(out) + CTP(in). It catalyses the reaction CDP(out) + UTP(in) = CDP(in) + UTP(out). The enzyme catalyses dCTP(out) + UTP(in) = dCTP(in) + UTP(out). It carries out the reaction dCDP(out) + UTP(in) = dCDP(in) + UTP(out). The catalysed reaction is UTP(in) + GTP(out) = UTP(out) + GTP(in). It catalyses the reaction UTP(in) + GDP(out) = UTP(out) + GDP(in). The enzyme catalyses dGTP(out) + UTP(in) = dGTP(in) + UTP(out). It carries out the reaction dGDP(out) + UTP(in) = dGDP(in) + UTP(out). The catalysed reaction is ITP(out) + UTP(in) = ITP(in) + UTP(out). With respect to regulation, inhibited by pyridoxal 5'-phosphate, 4,7-diphenyl-1,10-phenanthroline, tannic acid, and mercurials (mercury dichloride, mersalyl acid, p-hydroxymercuribenzoate). In terms of biological role, mitochondrial transporter that imports/exports pyrimidine nucleotides into and from mitochondria. Selectively transports uridine, thymidine, guanosine, cytosine and inosine (deoxy)nucleoside di- and triphosphates by an antiport mechanism. May import (deoxy)nucleoside triphosphates in exchange for intramitochondrial (deoxy)nucleoside diphosphates, thus providing precursors necessary for de novo synthesis of mitochondrial DNA and RNA while exporting products of their catabolism. Participates in mitochondrial genome maintenance, regulation of mitochondrial membrane potential and mitochondrial respiration. Upon INS or IGF1 stimulation regulates cell growth and proliferation by controlling mitochondrial DNA replication and transcription, the ratio of mitochondria-to nuclear-encoded components of the electron transport chain resulting in control of mitochondrial ROS production. Participates in dendritic cell endocytosis and may associate with mitochondrial oxidative phosphorylation. This chain is Solute carrier family 25 member 33 (SLC25A33), found in Homo sapiens (Human).